The following is a 431-amino-acid chain: Serine--tRNA ligase (431 aa).

Residue 237 to 239 (TAE) coordinates L-serine. 268-270 (RSE) contacts ATP. L-serine is bound at residue E291. Residue 355 to 358 (EISS) coordinates ATP. S390 lines the L-serine pocket.

Belongs to the class-II aminoacyl-tRNA synthetase family. Type-1 seryl-tRNA synthetase subfamily. Homodimer. The tRNA molecule binds across the dimer.

The protein localises to the cytoplasm. It carries out the reaction tRNA(Ser) + L-serine + ATP = L-seryl-tRNA(Ser) + AMP + diphosphate + H(+). The enzyme catalyses tRNA(Sec) + L-serine + ATP = L-seryl-tRNA(Sec) + AMP + diphosphate + H(+). It participates in aminoacyl-tRNA biosynthesis; selenocysteinyl-tRNA(Sec) biosynthesis; L-seryl-tRNA(Sec) from L-serine and tRNA(Sec): step 1/1. In terms of biological role, catalyzes the attachment of serine to tRNA(Ser). Is also able to aminoacylate tRNA(Sec) with serine, to form the misacylated tRNA L-seryl-tRNA(Sec), which will be further converted into selenocysteinyl-tRNA(Sec). In Neisseria gonorrhoeae (strain ATCC 700825 / FA 1090), this protein is Serine--tRNA ligase.